Here is a 447-residue protein sequence, read N- to C-terminus: N-succinylarginine dihydrolase (447 aa).

Residues 19-28 (AGLSFGNEAS), N110, and 137-138 (HR) contribute to the substrate site. The active site involves E174. R213 is a substrate binding site. Residue H249 is part of the active site. Residues D251 and N364 each contribute to the substrate site. The Nucleophile role is filled by C370.

The protein belongs to the succinylarginine dihydrolase family. Homodimer.

It catalyses the reaction N(2)-succinyl-L-arginine + 2 H2O + 2 H(+) = N(2)-succinyl-L-ornithine + 2 NH4(+) + CO2. Its pathway is amino-acid degradation; L-arginine degradation via AST pathway; L-glutamate and succinate from L-arginine: step 2/5. Functionally, catalyzes the hydrolysis of N(2)-succinylarginine into N(2)-succinylornithine, ammonia and CO(2). The protein is N-succinylarginine dihydrolase of Yersinia pseudotuberculosis serotype O:1b (strain IP 31758).